The sequence spans 486 residues: FAD-dependent oxidoreductase domain-containing protein 1 (486 aa).

The chain crosses the membrane as a helical span at residues 66 to 82; that stretch reads VVIVGGGVLGLSVAYWL.

In terms of assembly, associates with components of the mitochondrial respiratory chain complex I. FAD is required as a cofactor.

It is found in the mitochondrion inner membrane. Its function is as follows. Required for the assembly of the mitochondrial membrane respiratory chain NADH dehydrogenase (Complex I). Involved in mid-late stages of complex I assembly. The polypeptide is FAD-dependent oxidoreductase domain-containing protein 1 (FOXRED1) (Bos taurus (Bovine)).